The primary structure comprises 176 residues: MVTIALGSKNPVKINATKEALDVLKLNWDLIGIEVDSGVDKQPFCDQTYVGARNRALNVIRVTNADIGLGIEGGVCNVYGKFIANAVVYVITKEGLENFAISSSFTLPSSMVSLILQGKELGEASDIIFKTNNSKTKEGAIGLLTNNVINRKMLYVQPIVLALYPIYNTMINNTPF.

Residue D36 coordinates Mg(2+).

It belongs to the YjjX NTPase family. Homodimer. Requires Mg(2+) as cofactor. Mn(2+) is required as a cofactor.

It catalyses the reaction XTP + H2O = XDP + phosphate + H(+). The catalysed reaction is ITP + H2O = IDP + phosphate + H(+). In terms of biological role, phosphatase that hydrolyzes non-canonical purine nucleotides such as XTP and ITP to their respective diphosphate derivatives. Probably excludes non-canonical purines from DNA/RNA precursor pool, thus preventing their incorporation into DNA/RNA and avoiding chromosomal lesions. This Saccharolobus islandicus (strain Y.G.57.14 / Yellowstone #1) (Sulfolobus islandicus) protein is Probable inosine/xanthosine triphosphatase.